Consider the following 1178-residue polypeptide: DNA-directed RNA polymerase subunit beta' (1178 aa).

The Zn(2+) site is built by C60, C62, C75, and C78. Mg(2+) contacts are provided by D450, D452, and D454. Positions 795, 869, 876, and 879 each coordinate Zn(2+).

Belongs to the RNA polymerase beta' chain family. As to quaternary structure, the RNAP catalytic core consists of 2 alpha, 1 beta, 1 beta' and 1 omega subunit. When a sigma factor is associated with the core the holoenzyme is formed, which can initiate transcription. It depends on Mg(2+) as a cofactor. The cofactor is Zn(2+).

It catalyses the reaction RNA(n) + a ribonucleoside 5'-triphosphate = RNA(n+1) + diphosphate. Its function is as follows. DNA-dependent RNA polymerase catalyzes the transcription of DNA into RNA using the four ribonucleoside triphosphates as substrates. This Clostridium perfringens (strain ATCC 13124 / DSM 756 / JCM 1290 / NCIMB 6125 / NCTC 8237 / Type A) protein is DNA-directed RNA polymerase subunit beta'.